A 1396-amino-acid chain; its full sequence is MASDSAGATISGNFSNSDNSETLNLNTTKLYSSAISSISPQFPSPKPTSSCPSIPNSKRIPNTNFIVDLFRLPHQSSSVAFFLSHFHSDHYSGLSSSWSKGIIYCSHKTARLVAEILQVPSQFVFALPMNQMVKIDGSEVVLIEANHCPGAVQFLFKVKLESSGFEKYVHTGDFRFCDEMRFDPFLNGFVGCDGVFLDTTYCNPKFVFPSQEESVGYVVSVIDKISEEKVLFLVATYVVGKEKILVEIARRCKRKIVVDARKMSMLSVLGCGEEGMFTEDENESDVHVVGWNVLGETWPYFRPNFVKMNEIMVEKGYDKVVGFVPTGWTYEVKRNKFAVRFKDSMEIHLVPYSEHSNYDELREFIKFLKPKRVIPTVGVDIEKFDCKEVNKMQKHFSGLVDEMANKKDFLLGFYRQSYQKNEKSDVDVVSHSAEVYEEEEKNACEDGGENVPSSRGPILHDTTPSSDSRLLIKLRDSLPAWVTEEQMLDLIKKHAGNPVDIVSNFYEYEAELYKQASLPTPSLNNQAVLFDDDVTDLQPNPVKGICPDVQAIQKGFDLPRKMNLTKGTISPGKRGKSSGSKSNKKAKKDPKSKPVGPGQPTLFKFFNKVLDGGSNSVSVGSETEECNTDKKMVHIDASEAYKEVTDQFIDIVNGSESLRDYAASIIDEAKGDISRALNIYYSKPREIPGDHAGERGLSSKTIQYPKCSEACSSQEDKKASENSGHAVNICVQTSAEESVDKNYVSLPPEKYQPKEHACWREGQPAPYIHLVRTFASVESEKGKIKAMSMLCNMFRSLFALSPEDVLPAVYLCTNKIAADHENIELNIGGSLISSALEEACGISRSTVRDMYNSLGDLGDVAQLCRQTQKLLVPPPPLLVRDVFSTLRKISVQTGTGSTRLKKNLIVKLMRSCREKEIKFLVRTLARNLRIGAMLRTVLPALGRAIVMNSFWNDHNKELSESCFREKLEGVSAAVVEAYNILPSLDVVVPSLMDKDIEFSTSTLSMVPGIPIKPMLAKIAKGVQEFFNLSQEKAFTCEYKYDGQRAQIHKLLDGTVCIFSRNGDETTSRFPDLVDVIKQFSCPAAETFMLDAEVVATDRINGNKLMSFQELSTRERGSKDALITTESIKVEVCVFVFDIMFVNGEQLLALPLRERRRRLKEVFPETRPGYLEYAKEITVGAEEASLNNHDTLSRINAFLEEAFQSSCEGIMVKSLDVNAGYCPTKRSDSWLKVKRDYVDGLGDTLDLVPIGAWYGNGRKAGWYSPFLMACFNPETEEFQSVCRVMSGFSDAFYIEMKEFYSEDKILAKKPPYYRTGETPDMWFSAEVVWEIRGADFTVSPVHSASLGLVHPSRGISVRFPRFISKVTDRNPEECSTATDIAEMFHAQTRKMNITSQH.

Disordered regions lie at residues 441-464 (KNAC…DTTP) and 562-599 (MNLT…GPGQ). 2 consecutive short sequence motifs (nuclear localization signal) follow at residues 572–579 (GKRGKSSG) and 886–893 (LRKISVQT). E1037 provides a ligand contact to ATP. Residue K1039 is the N6-AMP-lysine intermediate of the active site. Positions 1044, 1060, 1092, and 1136 each coordinate ATP. E1092 serves as a coordination point for Mg(2+). E1207 contributes to the Mg(2+) binding site. 3 residues coordinate ATP: K1212, R1225, and K1231.

This sequence belongs to the ATP-dependent DNA ligase family. Requires Mg(2+) as cofactor. Mostly expressed in buds and flowers, and, to a lower extent, in stems, leaves, siliques and seeds.

Its subcellular location is the nucleus. The catalysed reaction is ATP + (deoxyribonucleotide)n-3'-hydroxyl + 5'-phospho-(deoxyribonucleotide)m = (deoxyribonucleotide)n+m + AMP + diphosphate.. Functionally, DNA ligase that seals nicks in double-stranded DNA during DNA replication, DNA recombination and DNA repair. Required to maintain seed viability (e.g. longevity and storability) and during seed germination, probably by repairing DNA damage accumulated during seed development, storage and/or imbibition. Facilitates seed germination in cold conditions (2 degrees Celsius) and under oxidative stress (e.g. menadione, a genotoxic agent). Involved in repair of X-ray-induced damage. In terms of biological role, limits stable root transformation by A.tumefaciens T-DNA. The protein is DNA ligase 6 of Arabidopsis thaliana (Mouse-ear cress).